The sequence spans 363 residues: 3-isopropylmalate dehydrogenase (363 aa).

An NAD(+)-binding site is contributed by 79–92 (GPKWEHLPPNDQPE). Residues Arg-100, Arg-110, Arg-139, and Asp-228 each contribute to the substrate site. Asp-228, Asp-252, and Asp-256 together coordinate Mg(2+). Residue 286–298 (GSAPDIAGKNIAN) participates in NAD(+) binding.

It belongs to the isocitrate and isopropylmalate dehydrogenases family. LeuB type 1 subfamily. As to quaternary structure, homodimer. The cofactor is Mg(2+). Mn(2+) is required as a cofactor.

The protein resides in the cytoplasm. It carries out the reaction (2R,3S)-3-isopropylmalate + NAD(+) = 4-methyl-2-oxopentanoate + CO2 + NADH. It participates in amino-acid biosynthesis; L-leucine biosynthesis; L-leucine from 3-methyl-2-oxobutanoate: step 3/4. In terms of biological role, catalyzes the oxidation of 3-carboxy-2-hydroxy-4-methylpentanoate (3-isopropylmalate) to 3-carboxy-4-methyl-2-oxopentanoate. The product decarboxylates to 4-methyl-2 oxopentanoate. The polypeptide is 3-isopropylmalate dehydrogenase (Vibrio vulnificus (strain YJ016)).